The primary structure comprises 351 residues: D-threonate 4-phosphate dehydrogenase (351 aa).

Histidine 147 and threonine 148 together coordinate substrate. The a divalent metal cation site is built by histidine 177, histidine 221, and histidine 276. Positions 284, 293, and 302 each coordinate substrate.

The protein belongs to the PdxA family. PdxA2 subfamily. In terms of assembly, homodimer. Requires a divalent metal cation as cofactor.

The enzyme catalyses 4-O-phospho-D-threonate + NAD(+) = dihydroxyacetone phosphate + CO2 + NADH. Catalyzes the NAD-dependent oxidation and subsequent decarboxylation of D-threonate 4-phosphate to produce dihydroxyacetone phosphate (DHAP). Can also use 4-hydroxy-L-threonine 4-phosphate as substrate. The protein is D-threonate 4-phosphate dehydrogenase of Bordetella bronchiseptica (strain ATCC BAA-588 / NCTC 13252 / RB50) (Alcaligenes bronchisepticus).